We begin with the raw amino-acid sequence, 555 residues long: CTP synthase (555 aa).

The interval 1-271 is amidoligase domain; sequence MVKRGKKTKY…DDKLAELFNI (271 aa). Serine 19 contributes to the CTP binding site. Serine 19 lines the UTP pocket. Residues 20–25 and aspartate 77 each bind ATP; that span reads SLGKGL. Residues aspartate 77 and glutamate 145 each coordinate Mg(2+). Residues 152-154, 192-197, and lysine 228 contribute to the CTP site; these read DIE and KTKPTQ. Residues 192 to 197 and lysine 228 contribute to the UTP site; that span reads KTKPTQ. A Glutamine amidotransferase type-1 domain is found at 297–538; the sequence is RVGVVGKYVE…VHAAREQRDQ (242 aa). Glycine 358 lines the L-glutamine pocket. Cysteine 385 functions as the Nucleophile; for glutamine hydrolysis in the catalytic mechanism. L-glutamine-binding positions include 386–389, glutamate 409, and arginine 466; that span reads LGLQ. Catalysis depends on residues histidine 511 and glutamate 513.

The protein belongs to the CTP synthase family. Homotetramer.

The enzyme catalyses UTP + L-glutamine + ATP + H2O = CTP + L-glutamate + ADP + phosphate + 2 H(+). It catalyses the reaction L-glutamine + H2O = L-glutamate + NH4(+). It carries out the reaction UTP + NH4(+) + ATP = CTP + ADP + phosphate + 2 H(+). The protein operates within pyrimidine metabolism; CTP biosynthesis via de novo pathway; CTP from UDP: step 2/2. Allosterically activated by GTP, when glutamine is the substrate; GTP has no effect on the reaction when ammonia is the substrate. The allosteric effector GTP functions by stabilizing the protein conformation that binds the tetrahedral intermediate(s) formed during glutamine hydrolysis. Inhibited by the product CTP, via allosteric rather than competitive inhibition. Functionally, catalyzes the ATP-dependent amination of UTP to CTP with either L-glutamine or ammonia as the source of nitrogen. Regulates intracellular CTP levels through interactions with the four ribonucleotide triphosphates. This Anaeromyxobacter sp. (strain Fw109-5) protein is CTP synthase.